The following is a 66-amino-acid chain: Small ribosomal subunit protein bS21 (66 aa).

The tract at residues 47 to 66 (KAQEAARRKRKFARKRMYED) is disordered. Basic residues predominate over residues 53-66 (RRKRKFARKRMYED).

This sequence belongs to the bacterial ribosomal protein bS21 family.

The chain is Small ribosomal subunit protein bS21 from Rickettsia bellii (strain RML369-C).